A 211-amino-acid polypeptide reads, in one-letter code: Large ribosomal subunit protein bL25 (211 aa).

2 disordered regions span residues 1-23 (MAGE…AARQ) and 191-211 (LRSA…AEEV). Over residues 196–211 (NEADEEETEEATAEEV) the composition is skewed to acidic residues.

It belongs to the bacterial ribosomal protein bL25 family. CTC subfamily. In terms of assembly, part of the 50S ribosomal subunit; part of the 5S rRNA/L5/L18/L25 subcomplex. Contacts the 5S rRNA. Binds to the 5S rRNA independently of L5 and L18.

In terms of biological role, this is one of the proteins that binds to the 5S RNA in the ribosome where it forms part of the central protuberance. The chain is Large ribosomal subunit protein bL25 from Dinoroseobacter shibae (strain DSM 16493 / NCIMB 14021 / DFL 12).